Reading from the N-terminus, the 207-residue chain is Ribosomal RNA large subunit methyltransferase E (207 aa).

Gly-60, Trp-62, Asp-80, Asp-96, and Asp-121 together coordinate S-adenosyl-L-methionine. Catalysis depends on Lys-161, which acts as the Proton acceptor.

The protein belongs to the class I-like SAM-binding methyltransferase superfamily. RNA methyltransferase RlmE family.

It is found in the cytoplasm. The enzyme catalyses uridine(2552) in 23S rRNA + S-adenosyl-L-methionine = 2'-O-methyluridine(2552) in 23S rRNA + S-adenosyl-L-homocysteine + H(+). Functionally, specifically methylates the uridine in position 2552 of 23S rRNA at the 2'-O position of the ribose in the fully assembled 50S ribosomal subunit. This is Ribosomal RNA large subunit methyltransferase E from Marinobacter nauticus (strain ATCC 700491 / DSM 11845 / VT8) (Marinobacter aquaeolei).